Here is a 396-residue protein sequence, read N- to C-terminus: MAKAKFDRSKPHVNIGTIGHVDHGKTTTTAAITKVLSEKYPEENQAFAFDAIDKAPEEKERGITINIAHVEYSTPKRHYAHVDAPGHADYIKNMITGAAQMDGAILVVAATDGPMPQTREHVLLARQVGVPYILVALNKCDMVDDEDLIELVEMEVRELLAEQDFDEDAPIVHISALKALEGDEKWEQSILDLMDACDESIPDPVRETDKPFLMPIEDIFTITGRGTVVTGRVERGKLNINDDVEILGIKEKSQNTTVTGIEMFRKQLDYAEAGDNCGLLLRGTKREDVERGQIVAKPGAYTPHTEFEGSVYVLSKDEGGRHTPFFDNYRPQFYFRTTDVTGVVKLPEGTEMVMPGDNVDMSVTLIQPVAMDEGLRFAIREGGRTVGAGRVTKINK.

A tr-type G domain is found at 10 to 205; sequence KPHVNIGTIG…ACDESIPDPV (196 aa). Residues 19 to 26 are G1; it reads GHVDHGKT. A GTP-binding site is contributed by 19-26; the sequence is GHVDHGKT. Threonine 26 serves as a coordination point for Mg(2+). Residues 62-66 form a G2 region; sequence GITIN. The G3 stretch occupies residues 83 to 86; that stretch reads DAPG. Residues 83–87 and 138–141 contribute to the GTP site; these read DAPGH and NKCD. A G4 region spans residues 138 to 141; sequence NKCD. The interval 175–177 is G5; it reads SAL.

Belongs to the TRAFAC class translation factor GTPase superfamily. Classic translation factor GTPase family. EF-Tu/EF-1A subfamily. In terms of assembly, monomer.

The protein resides in the cytoplasm. The catalysed reaction is GTP + H2O = GDP + phosphate + H(+). GTP hydrolase that promotes the GTP-dependent binding of aminoacyl-tRNA to the A-site of ribosomes during protein biosynthesis. In Corynebacterium kroppenstedtii (strain DSM 44385 / JCM 11950 / CIP 105744 / CCUG 35717), this protein is Elongation factor Tu.